The following is a 346-amino-acid chain: D-alanine--D-alanine ligase (346 aa).

The ATP-grasp domain maps to 125-325 (KRIWRSEGLP…YPALCLEVLR (201 aa)). 151–206 (FAALGSPMIVKPDREGSTIGLTKVTQIEQCGAAYALAARHDAMVLCEQFVKGDEVT) contributes to the ATP binding site. Mg(2+) contacts are provided by aspartate 278, glutamate 292, and asparagine 294.

This sequence belongs to the D-alanine--D-alanine ligase family. Mg(2+) is required as a cofactor. The cofactor is Mn(2+).

The protein resides in the cytoplasm. The catalysed reaction is 2 D-alanine + ATP = D-alanyl-D-alanine + ADP + phosphate + H(+). It participates in cell wall biogenesis; peptidoglycan biosynthesis. Functionally, cell wall formation. The chain is D-alanine--D-alanine ligase from Albidiferax ferrireducens (strain ATCC BAA-621 / DSM 15236 / T118) (Rhodoferax ferrireducens).